The following is a 134-amino-acid chain: Ribosome-binding factor A (134 aa).

This sequence belongs to the RbfA family. In terms of assembly, monomer. Binds 30S ribosomal subunits, but not 50S ribosomal subunits or 70S ribosomes.

It is found in the cytoplasm. One of several proteins that assist in the late maturation steps of the functional core of the 30S ribosomal subunit. Associates with free 30S ribosomal subunits (but not with 30S subunits that are part of 70S ribosomes or polysomes). Required for efficient processing of 16S rRNA. May interact with the 5'-terminal helix region of 16S rRNA. In Bartonella bacilliformis (strain ATCC 35685 / KC583 / Herrer 020/F12,63), this protein is Ribosome-binding factor A.